Consider the following 213-residue polypeptide: MPARKQPRSVAREIALLSLSQIKGKPDKLEAVELDELMLAAVRTLSSEIHDILEDAASEVSRAEEQLLRSETLAVNVKSARTMAADALELTRAAINRLGHVVELPEFLQLTRQHEVRNFALEILTTLRRRNDQIKEVIDGSLVDWQYHRLPRLDRDILRIAVAEILFLETPYKVAINEAVELAKRYSDEDGHRFINGVLRRVSDRLRAEDSLK.

This sequence belongs to the NusB family.

Its function is as follows. Involved in transcription antitermination. Required for transcription of ribosomal RNA (rRNA) genes. Binds specifically to the boxA antiterminator sequence of the ribosomal RNA (rrn) operons. This Picosynechococcus sp. (strain ATCC 27264 / PCC 7002 / PR-6) (Agmenellum quadruplicatum) protein is Transcription antitermination protein NusB.